A 418-amino-acid polypeptide reads, in one-letter code: UDP-N-acetylglucosamine 1-carboxyvinyltransferase (418 aa).

22–23 (KN) provides a ligand contact to phosphoenolpyruvate. Arginine 92 is a UDP-N-acetyl-alpha-D-glucosamine binding site. The active-site Proton donor is cysteine 116. Cysteine 116 is modified (2-(S-cysteinyl)pyruvic acid O-phosphothioketal). UDP-N-acetyl-alpha-D-glucosamine is bound by residues 121–125 (RPIDL), aspartate 305, and leucine 327.

The protein belongs to the EPSP synthase family. MurA subfamily.

It localises to the cytoplasm. The enzyme catalyses phosphoenolpyruvate + UDP-N-acetyl-alpha-D-glucosamine = UDP-N-acetyl-3-O-(1-carboxyvinyl)-alpha-D-glucosamine + phosphate. Its pathway is cell wall biogenesis; peptidoglycan biosynthesis. Cell wall formation. Adds enolpyruvyl to UDP-N-acetylglucosamine. The protein is UDP-N-acetylglucosamine 1-carboxyvinyltransferase of Campylobacter jejuni (strain RM1221).